A 612-amino-acid polypeptide reads, in one-letter code: Threonine--tRNA ligase (612 aa).

The segment at 218–509 is catalytic; sequence DHRKLGVELG…LSEHFGGNFP (292 aa). Zn(2+) contacts are provided by Cys310, His361, and His486.

Belongs to the class-II aminoacyl-tRNA synthetase family. Homodimer. Zn(2+) is required as a cofactor.

It localises to the cytoplasm. It carries out the reaction tRNA(Thr) + L-threonine + ATP = L-threonyl-tRNA(Thr) + AMP + diphosphate + H(+). In terms of biological role, catalyzes the attachment of threonine to tRNA(Thr) in a two-step reaction: L-threonine is first activated by ATP to form Thr-AMP and then transferred to the acceptor end of tRNA(Thr). Also edits incorrectly charged L-seryl-tRNA(Thr). This Helicobacter pylori (strain J99 / ATCC 700824) (Campylobacter pylori J99) protein is Threonine--tRNA ligase.